The sequence spans 74 residues: Large ribosomal subunit protein uL29 (74 aa).

This sequence belongs to the universal ribosomal protein uL29 family.

The polypeptide is Large ribosomal subunit protein uL29 (Streptomyces griseus subsp. griseus (strain JCM 4626 / CBS 651.72 / NBRC 13350 / KCC S-0626 / ISP 5235)).